Here is a 563-residue protein sequence, read N- to C-terminus: Cytochrome P450 monooxygenase efuG (563 aa).

Residues 10–30 (ITSHQWGIGSVFLLISIPLIV) form a helical membrane-spanning segment. A disordered region spans residues 462–482 (PDDPQSGPRKDAKKQKAKSDG). Cys505 provides a ligand contact to heme.

The protein belongs to the cytochrome P450 family. Heme is required as a cofactor.

The protein resides in the membrane. It functions in the pathway secondary metabolite biosynthesis; terpenoid biosynthesis. Its function is as follows. Cytochrome P450 monooxygenase; part of the gene cluster that mediates the biosynthesis of enfumafungin, a glycosylated fernene-type triterpenoid with potent antifungal activity, mediated by its interaction with beta-1,3-glucan synthase and the fungal cell wall. The pathway begins with the terpene cyclase-glycosyl transferase fusion protein that most likely uses 2,3-oxidosqualene as substrate and catalyzes glycosylation immediately after cyclization. The fernene glycoside then could be processed by the desaturase efuI which catalyzes isomerization of a double bond established by efuA to form the core structure. The latter would then undergo a series of hydroxylations in unknown order at C-2, C-19, C-23 and C-25, which would be catalyzed by two of the three cytochrome P450 monooxygenases efuB, efuG or efuH. The hydroxy-group at C-25 becomes oxidized by the dehydrogenase efuE to enable a spontaneous, non-enzymatic hemiacetal formation with C-23. After hydroxylation at C-2, acetylation by the acetyltransferase efuC takes place. The final steps in enfumafungin biosynthesis require expansion of the 5-membered ring by lactonization via a Baeyer-Villiger reaction mediated by one of the BGC's cytochrome P450 monooxygenases (efuB, efuG or efuH) followed by ring cleavage. This type of reaction would establish a double bond between C-20 and C-21 which could be reduced by the reductase efuL to form the final product. In Hormonema carpetanum, this protein is Cytochrome P450 monooxygenase efuG.